Consider the following 148-residue polypeptide: D-aminoacyl-tRNA deacylase (148 aa).

Positions 137-138 (GP) match the Gly-cisPro motif, important for rejection of L-amino acids motif.

Belongs to the DTD family. As to quaternary structure, homodimer.

It is found in the cytoplasm. The catalysed reaction is glycyl-tRNA(Ala) + H2O = tRNA(Ala) + glycine + H(+). It carries out the reaction a D-aminoacyl-tRNA + H2O = a tRNA + a D-alpha-amino acid + H(+). In terms of biological role, an aminoacyl-tRNA editing enzyme that deacylates mischarged D-aminoacyl-tRNAs. Also deacylates mischarged glycyl-tRNA(Ala), protecting cells against glycine mischarging by AlaRS. Acts via tRNA-based rather than protein-based catalysis; rejects L-amino acids rather than detecting D-amino acids in the active site. By recycling D-aminoacyl-tRNA to D-amino acids and free tRNA molecules, this enzyme counteracts the toxicity associated with the formation of D-aminoacyl-tRNA entities in vivo and helps enforce protein L-homochirality. The chain is D-aminoacyl-tRNA deacylase from Ligilactobacillus salivarius (strain UCC118) (Lactobacillus salivarius).